Reading from the N-terminus, the 375-residue chain is Alcohol dehydrogenase 1 (375 aa).

Ser-2 is modified (N-acetylserine). Positions 47, 68, 98, 101, 104, 112, and 175 each coordinate Zn(2+). Residues 200–205, Asp-224, and Lys-229 each bind NAD(+); that span reads GLGGVG. Lys-234 bears the N6-succinyllysine mark. 293 to 295 lines the NAD(+) pocket; sequence VGV. Lys-340 is subject to N6-succinyllysine. Arg-370 contributes to the NAD(+) binding site.

The protein belongs to the zinc-containing alcohol dehydrogenase family. Class-I subfamily. As to quaternary structure, dimer of identical or non-identical chains of three types (A, B, C), which are coded by 3 separate genes at different loci. Requires Zn(2+) as cofactor. Expressed at high levels in the liver, small intestine and eye, at moderate levels in kidney, ovary and uterus, and at low levels in the spinal cord, thymus, heart, stomach mucosa, skin and testis.

The protein localises to the cytoplasm. It carries out the reaction a primary alcohol + NAD(+) = an aldehyde + NADH + H(+). It catalyses the reaction a secondary alcohol + NAD(+) = a ketone + NADH + H(+). This chain is Alcohol dehydrogenase 1 (Adh1), found in Mus musculus (Mouse).